Here is a 256-residue protein sequence, read N- to C-terminus: uncharacterized protein (256 aa).

The protein belongs to the metallo-beta-lactamase superfamily.

This is an uncharacterized protein from Methanocaldococcus jannaschii (strain ATCC 43067 / DSM 2661 / JAL-1 / JCM 10045 / NBRC 100440) (Methanococcus jannaschii).